The chain runs to 195 residues: Thymidine kinase (195 aa).

ATP-binding positions include 15-22 (GSMFSGKS) and 88-91 (DEVQ). The Proton acceptor role is filled by glutamate 89. Zn(2+) contacts are provided by cysteine 145, cysteine 148, cysteine 183, and cysteine 186.

Belongs to the thymidine kinase family. As to quaternary structure, homotetramer.

It localises to the cytoplasm. It carries out the reaction thymidine + ATP = dTMP + ADP + H(+). The polypeptide is Thymidine kinase (Bacillus cereus (strain 03BB102)).